Consider the following 311-residue polypeptide: Uridine phosphorylase 1 (311 aa).

Phosphate is bound by residues G61, R95, and 139 to 142 (RIGT). Residues 143–144 (SG) and 218–220 (QGR) each bind uridine.

This sequence belongs to the PNP/UDP phosphorylase family. Homodimer. Post-translationally, the N-terminus is blocked.

It catalyses the reaction uridine + phosphate = alpha-D-ribose 1-phosphate + uracil. The enzyme catalyses 2'-deoxyuridine + phosphate = 2-deoxy-alpha-D-ribose 1-phosphate + uracil. The protein operates within pyrimidine metabolism; UMP biosynthesis via salvage pathway; uracil from uridine (phosphorylase route): step 1/1. With respect to regulation, strongly inhibited by 2,2'-anhydro-5-ethyluridine, a competitive inhibitor. Its function is as follows. Catalyzes the reversible phosphorylytic cleavage of uridine to uracil and ribose-1-phosphate which can then be utilized as carbon and energy sources or in the rescue of pyrimidine bases for nucleotide synthesis. Shows broad substrate specificity and can also accept deoxyuridine and other analogous compounds. This is Uridine phosphorylase 1 from Mus musculus (Mouse).